Here is a 560-residue protein sequence, read N- to C-terminus: Glutamine--tRNA ligase (560 aa).

A 'HIGH' region motif is present at residues 36 to 46; that stretch reads PEPNGFAHIGH. Residues 37–39 and 43–49 each bind ATP; these read EPN and HIGHAKA. L-glutamine contacts are provided by Asp69 and Tyr214. 263–264 lines the ATP pocket; sequence RL. Positions 270-274 match the 'KMSKS' region motif; sequence LTSKR.

Belongs to the class-I aminoacyl-tRNA synthetase family. In terms of assembly, monomer.

It is found in the cytoplasm. It catalyses the reaction tRNA(Gln) + L-glutamine + ATP = L-glutaminyl-tRNA(Gln) + AMP + diphosphate. The polypeptide is Glutamine--tRNA ligase (Chromobacterium violaceum (strain ATCC 12472 / DSM 30191 / JCM 1249 / CCUG 213 / NBRC 12614 / NCIMB 9131 / NCTC 9757 / MK)).